Consider the following 72-residue polypeptide: DNA-directed RNA polymerase subunit omega (72 aa).

Belongs to the RNA polymerase subunit omega family. In terms of assembly, the RNAP catalytic core consists of 2 alpha, 1 beta, 1 beta' and 1 omega subunit. When a sigma factor is associated with the core the holoenzyme is formed, which can initiate transcription.

The enzyme catalyses RNA(n) + a ribonucleoside 5'-triphosphate = RNA(n+1) + diphosphate. Promotes RNA polymerase assembly. Latches the N- and C-terminal regions of the beta' subunit thereby facilitating its interaction with the beta and alpha subunits. The protein is DNA-directed RNA polymerase subunit omega of Francisella tularensis subsp. tularensis (strain FSC 198).